Reading from the N-terminus, the 483-residue chain is Aspartyl/glutamyl-tRNA(Asn/Gln) amidotransferase subunit B (483 aa).

This sequence belongs to the GatB/GatE family. GatB subfamily. In terms of assembly, heterotrimer of A, B and C subunits.

It carries out the reaction L-glutamyl-tRNA(Gln) + L-glutamine + ATP + H2O = L-glutaminyl-tRNA(Gln) + L-glutamate + ADP + phosphate + H(+). The catalysed reaction is L-aspartyl-tRNA(Asn) + L-glutamine + ATP + H2O = L-asparaginyl-tRNA(Asn) + L-glutamate + ADP + phosphate + 2 H(+). In terms of biological role, allows the formation of correctly charged Asn-tRNA(Asn) or Gln-tRNA(Gln) through the transamidation of misacylated Asp-tRNA(Asn) or Glu-tRNA(Gln) in organisms which lack either or both of asparaginyl-tRNA or glutaminyl-tRNA synthetases. The reaction takes place in the presence of glutamine and ATP through an activated phospho-Asp-tRNA(Asn) or phospho-Glu-tRNA(Gln). This chain is Aspartyl/glutamyl-tRNA(Asn/Gln) amidotransferase subunit B, found in Rickettsia conorii (strain ATCC VR-613 / Malish 7).